The following is a 276-amino-acid chain: Large ribosomal subunit protein uL2 (276 aa).

Positions 224–276 are disordered; the sequence is VMNPVDHPHGGGEGKAPIGRKSPMTPWGKPTLGFKTRKKKNKSDKFIIRRRKK. The segment covering 258-276 has biased composition (basic residues); it reads KTRKKKNKSDKFIIRRRKK.

Belongs to the universal ribosomal protein uL2 family. Part of the 50S ribosomal subunit. Forms a bridge to the 30S subunit in the 70S ribosome.

Functionally, one of the primary rRNA binding proteins. Required for association of the 30S and 50S subunits to form the 70S ribosome, for tRNA binding and peptide bond formation. It has been suggested to have peptidyltransferase activity; this is somewhat controversial. Makes several contacts with the 16S rRNA in the 70S ribosome. This chain is Large ribosomal subunit protein uL2, found in Geobacillus sp. (strain WCH70).